Consider the following 255-residue polypeptide: Thiazole synthase (255 aa).

The Schiff-base intermediate with DXP role is filled by Lys-97. 1-deoxy-D-xylulose 5-phosphate contacts are provided by residues Gly-158, 184–185, and 206–207; these read AG and NT.

It belongs to the ThiG family. Homotetramer. Forms heterodimers with either ThiH or ThiS.

The protein resides in the cytoplasm. The enzyme catalyses [ThiS sulfur-carrier protein]-C-terminal-Gly-aminoethanethioate + 2-iminoacetate + 1-deoxy-D-xylulose 5-phosphate = [ThiS sulfur-carrier protein]-C-terminal Gly-Gly + 2-[(2R,5Z)-2-carboxy-4-methylthiazol-5(2H)-ylidene]ethyl phosphate + 2 H2O + H(+). The protein operates within cofactor biosynthesis; thiamine diphosphate biosynthesis. Catalyzes the rearrangement of 1-deoxy-D-xylulose 5-phosphate (DXP) to produce the thiazole phosphate moiety of thiamine. Sulfur is provided by the thiocarboxylate moiety of the carrier protein ThiS. In vitro, sulfur can be provided by H(2)S. The sequence is that of Thiazole synthase from Moorella thermoacetica (strain ATCC 39073 / JCM 9320).